A 915-amino-acid polypeptide reads, in one-letter code: Alanine--tRNA ligase (915 aa).

Positions 609, 613, 712, and 716 each coordinate Zn(2+).

This sequence belongs to the class-II aminoacyl-tRNA synthetase family. Requires Zn(2+) as cofactor.

The protein localises to the cytoplasm. It carries out the reaction tRNA(Ala) + L-alanine + ATP = L-alanyl-tRNA(Ala) + AMP + diphosphate. Functionally, catalyzes the attachment of alanine to tRNA(Ala) in a two-step reaction: alanine is first activated by ATP to form Ala-AMP and then transferred to the acceptor end of tRNA(Ala). Also edits incorrectly charged Ser-tRNA(Ala) and Gly-tRNA(Ala) via its editing domain. The protein is Alanine--tRNA ligase of Methanoculleus marisnigri (strain ATCC 35101 / DSM 1498 / JR1).